The following is a 109-amino-acid chain: Iron-sulfur cluster assembly protein CyaY (109 aa).

The protein belongs to the frataxin family.

Involved in iron-sulfur (Fe-S) cluster assembly. May act as a regulator of Fe-S biogenesis. This is Iron-sulfur cluster assembly protein CyaY from Acidovorax ebreus (strain TPSY) (Diaphorobacter sp. (strain TPSY)).